Here is a 555-residue protein sequence, read N- to C-terminus: Benzoyl-CoA-dihydrodiol lyase (555 aa).

Belongs to the benzoyl-CoA oxygenase component C family. Homodimer.

It catalyses the reaction 2,3-epoxy-2,3-dihydrobenzoyl-CoA + 2 H2O = (3Z)-6-oxohex-3-enoyl-CoA + formate + H(+). Catalyzes the ring opening of 2,3-epoxy-2,3-dihydroxybenzoyl-CoA to form 3,4-didehydroadipyl-CoA semialdehyde. This Aromatoleum evansii (Azoarcus evansii) protein is Benzoyl-CoA-dihydrodiol lyase (boxC).